The following is an 86-amino-acid chain: MANSKSAKKRATQAERRRQHNASRRSMMRTYMKKTIAAIEAGDKEAATAALATATPLLDRMATKGLIHKNKAARHKARFTAAIKAL.

Residues 1-27 (MANSKSAKKRATQAERRRQHNASRRSM) show a composition bias toward basic residues. The interval 1–28 (MANSKSAKKRATQAERRRQHNASRRSMM) is disordered.

It belongs to the bacterial ribosomal protein bS20 family.

In terms of biological role, binds directly to 16S ribosomal RNA. This Aliivibrio fischeri (strain MJ11) (Vibrio fischeri) protein is Small ribosomal subunit protein bS20.